The following is a 405-amino-acid chain: Pulcherriminic acid synthase (405 aa).

Heme contacts are provided by K62, N229, R285, and C353.

Belongs to the cytochrome P450 family. In terms of assembly, homodimer. Heme is required as a cofactor.

It carries out the reaction cyclo(L-leucyl-L-leucyl) + 6 reduced [2Fe-2S]-[ferredoxin] + 3 O2 + 4 H(+) = pulcherriminic acid + 6 oxidized [2Fe-2S]-[ferredoxin] + 4 H2O. In terms of biological role, involved in the biosynthesis of pulcherrimin, a red extracellular pigment. Catalyzes the oxidation of cyclo(L-Leu-L-Leu) (cLL) to yield pulcherriminic acid which forms pulcherrimin via a nonenzymic reaction with Fe(3+). Substrates with small alkyl groups (cAA, cLG, cLP) exhibit weaker binding to CYP134A1, but substrates with larger hydrophobic side chains bind in a similar regime to cLL. In Bacillus subtilis (strain 168), this protein is Pulcherriminic acid synthase (cypX).